A 527-amino-acid polypeptide reads, in one-letter code: N-acetylglutamate synthase, mitochondrial (527 aa).

The N-terminal 39 residues, Met-1–Ala-39, are a transit peptide targeting the mitochondrion. The segment at Ser-28 to Glu-65 is disordered. Residues Ala-40 to Leu-83 are may stabilize the oligomeric structure. The tract at residues Ala-40–Pro-361 is amino-acid kinase domain (AAK). The N-acetyltransferase domain occupies Asp-360 to Cys-511. Substrate-binding positions include Lys-386, Lys-429, and Arg-459 to Asn-464.

This sequence belongs to the acetyltransferase family. In terms of assembly, homodimer. Homotetramer.

The protein localises to the mitochondrion matrix. It carries out the reaction L-glutamate + acetyl-CoA = N-acetyl-L-glutamate + CoA + H(+). With respect to regulation, inhibited by L-arginine. In terms of biological role, plays a role in the regulation of ureagenesis by producing the essential cofactor N-acetylglutamate (NAG), thus modulating carbamoylphosphate synthase I (cps1) activity. The polypeptide is N-acetylglutamate synthase, mitochondrial (Danio rerio (Zebrafish)).